Reading from the N-terminus, the 534-residue chain is DNA-directed RNA polymerase III subunit RPC3 (534 aa).

The tract at residues 161–181 (PSVPTTENSDPGPPPPAPTLV) is disordered. The residue at position 194 (Ser-194) is a Phosphoserine. Residues 197 to 228 (GKGKRRRSSDEDAAGEPKAKRPKYTTDNKEPI) form a disordered region. Basic and acidic residues predominate over residues 211–228 (GEPKAKRPKYTTDNKEPI).

The protein belongs to the eukaryotic RPC3/POLR3C RNA polymerase subunit family. Component of the RNA polymerase III complex consisting of 17 subunits: a ten-subunit horseshoe-shaped catalytic core composed of POLR3A/RPC1, POLR3B/RPC2, POLR1C/RPAC1, POLR1D/RPAC2, POLR3K/RPC10, POLR2E/RPABC1, POLR2F/RPABC2, POLR2H/RPABC3, POLR2K/RPABC4 and POLR2L/RPABC5; a mobile stalk composed of two subunits POLR3H/RPC8 and CRCP/RPC9, protruding from the core and functioning primarily in transcription initiation; and additional subunits homologous to general transcription factors of the RNA polymerase II machinery, POLR3C/RPC3-POLR3F/RPC6-POLR3G/RPC7 heterotrimer required for transcription initiation and POLR3D/RPC4-POLR3E/RPC5 heterodimer involved in both transcription initiation and termination. Directly interacts with POLR3G/RPC7 and POLR3GL. Directly interacts with POLR3F/RPC6. Interacts with GTF3C4. As part of the RNA polymerase III complex, interacts with PKP2.

It is found in the nucleus. In terms of biological role, DNA-dependent RNA polymerase catalyzes the transcription of DNA into RNA using the four ribonucleoside triphosphates as substrates. Specific peripheric component of RNA polymerase III (Pol III) which synthesizes small non-coding RNAs including 5S rRNA, snRNAs, tRNAs and miRNAs from at least 500 distinct genomic loci. Part of POLR3C/RPC3-POLR3F/RPC6-POLR3G/RPC7 heterotrimer, coordinates the dynamics of Pol III stalk and clamp modules during the transition from apo to elongation state. Pol III plays a key role in sensing and limiting infection by intracellular bacteria and DNA viruses. Acts as a nuclear and cytosolic DNA sensor involved in innate immune response. Can sense non-self dsDNA that serves as template for transcription into dsRNA. The non-self RNA polymerase III transcripts, such as Epstein-Barr virus-encoded RNAs (EBERs) induce type I interferon and NF-kappa-B through the RIG-I pathway. Preferentially binds single-stranded DNA (ssDNA) in a sequence-independent manner. The polypeptide is DNA-directed RNA polymerase III subunit RPC3 (Homo sapiens (Human)).